The primary structure comprises 150 residues: Large ribosomal subunit protein uL13 (150 aa).

Belongs to the universal ribosomal protein uL13 family. Part of the 50S ribosomal subunit.

Functionally, this protein is one of the early assembly proteins of the 50S ribosomal subunit, although it is not seen to bind rRNA by itself. It is important during the early stages of 50S assembly. In Chlamydia caviae (strain ATCC VR-813 / DSM 19441 / 03DC25 / GPIC) (Chlamydophila caviae), this protein is Large ribosomal subunit protein uL13.